The sequence spans 1111 residues: ATP-dependent DNA helicase mph1 (1111 aa).

2 stretches are compositionally biased toward acidic residues: residues 1 to 18 and 47 to 65; these read MSVS…EIDD and VFDE…DEFQ. 4 disordered regions span residues 1-81, 101-144, 210-240, and 259-280; these read MSVS…EDVE, FVTQ…HQPD, AFDS…RTNR, and IPSQ…PTHH. Polar residues-rich tracts occupy residues 132 to 143 and 215 to 238; these read PTTTTVDASHQP and LSLS…QFRT. The 169-residue stretch at 306–474 folds into the Helicase ATP-binding domain; the sequence is IAQRGLFHNL…AVIDGLGIAK (169 aa). 319–326 is an ATP binding site; it reads LPTGLGKT. Positions 422 to 425 match the DEAH box motif; sequence DEAH. The Helicase C-terminal domain maps to 644 to 818; it reads YLKQVVLNHF…GTRFTFHDDT (175 aa). Disordered regions lie at residues 836 to 898, 998 to 1047, and 1092 to 1111; these read IDIP…RKPT, SVLS…CTPE, and AERH…DTEE. Over residues 852–864 the composition is skewed to basic residues; the sequence is KRARPPKRPPKKF.

Belongs to the DEAD box helicase family. DEAH subfamily. FANCM sub-subfamily. In terms of assembly, interacts with the MHF histone-fold complex to form the FANCM-MHF complex.

The protein localises to the nucleus. The enzyme catalyses ATP + H2O = ADP + phosphate + H(+). In terms of biological role, ATP-dependent DNA helicase involved in DNA damage repair by homologous recombination and in genome maintenance. Capable of unwinding D-loops. Plays a role in limiting crossover recombinants during mitotic DNA double-strand break (DSB) repair. Component of a FANCM-MHF complex which promotes gene conversion at blocked replication forks, probably by reversal of the stalled fork. In Neosartorya fischeri (strain ATCC 1020 / DSM 3700 / CBS 544.65 / FGSC A1164 / JCM 1740 / NRRL 181 / WB 181) (Aspergillus fischerianus), this protein is ATP-dependent DNA helicase mph1.